Here is a 923-residue protein sequence, read N- to C-terminus: Leucine--tRNA ligase (923 aa).

The short motif at 41–52 (PYPSGEGLHVGH) is the 'HIGH' region element. Residues 698–702 (KMSKS) carry the 'KMSKS' region motif. Lysine 701 is a binding site for ATP.

This sequence belongs to the class-I aminoacyl-tRNA synthetase family.

The protein resides in the cytoplasm. It catalyses the reaction tRNA(Leu) + L-leucine + ATP = L-leucyl-tRNA(Leu) + AMP + diphosphate. This Amoebophilus asiaticus (strain 5a2) protein is Leucine--tRNA ligase.